Here is a 285-residue protein sequence, read N- to C-terminus: MAPPSRRECPSPSWRFPGLLLAALVLLRSSCSDACGPPPTFEAMELTSRPKPYYKVGERVEYDCKKGYHHFAPFLTHSICDRNHTWLPISDEPCVRKVCHYIPNPLHGEAILANGSYSFGNQLHFICNDGYYLIGKEILYCELKGSDAVWSGRPPICQKILCKPPPKINNGKHTFSDVDVFEYLDAVTYSCDPAPGPDPFSLIGESTIYCRDNSVWSGDAPECKVVKCRFPVIENGKQIAGFGKKFYYKATVIFECDEGFHIIGSDTIVCNSNSTWDPPVPKCVK.

Positions 1–32 (MAPPSRRECPSPSWRFPGLLLAALVLLRSSCS) are cleaved as a signal peptide. Sushi domains are found at residues 33–96 (DACG…PCVR), 97–159 (KVCH…ICQK), 160–225 (ILCK…ECKV), and 226–285 (VKCR…KCVK). 8 cysteine pairs are disulfide-bonded: Cys35–Cys80, Cys64–Cys94, Cys99–Cys141, Cys127–Cys157, Cys162–Cys210, Cys191–Cys223, Cys228–Cys270, and Cys256–Cys283. Residues Thr40 and Thr47 are each glycosylated (O-linked (GalNAc...) threonine). N-linked (GlcNAc...) asparagine glycosylation is present at Asn114.

Interacts with C3b. Interacts with C4b. Interacts with moesin/MSN.

Its subcellular location is the cytoplasmic vesicle. The protein resides in the secretory vesicle. It localises to the acrosome inner membrane. Functionally, acts as a cofactor for complement factor I, a serine protease which protects autologous cells against complement-mediated injury by cleaving C3b and C4b deposited on host tissue. May be involved in the fusion of the spermatozoa with the oocyte during fertilization. Also acts as a costimulatory factor for T-cells which induces the differentiation of CD4+ into T-regulatory 1 cells. T-regulatory 1 cells suppress immune responses by secreting interleukin-10, and therefore are thought to prevent autoimmunity. The sequence is that of Membrane cofactor protein (CD46) from Saguinus mystax (Moustached tamarin).